The sequence spans 655 residues: p-hydroxybenzoic acid efflux pump subunit AaeB (655 aa).

Helical transmembrane passes span 13–33 (FAVKLATAIVLALFVGFHFQL), 38–58 (WAVLTAAIVAAGPAFAAGGEP), 69–89 (LRIIGTFIGCIAGLVIIIAMI), 93–113 (LLMILVCCIWAGFCTWISSLV), 121–141 (WGLAGYTALIIVITIQPEPLL), 152–172 (EIVIGIVCAIMADLLFSPRSI), 370–390 (LFWLWTGWTSGSGAMVMIAVV), 407–427 (FIYGTLAALPLGLLYFLVIIP), 431–451 (QSMLLLCISLAVLGFFLGIEV), 459–479 (MGALASTINIIVLDNPMTFHF), and 482–502 (FLDSALGQIVGCVLAFTVILL).

Belongs to the aromatic acid exporter ArAE (TC 2.A.85) family.

The protein localises to the cell inner membrane. In terms of biological role, forms an efflux pump with AaeA. Could function as a metabolic relief valve, allowing to eliminate certain compounds when they accumulate to high levels in the cell. This Escherichia coli (strain K12 / MC4100 / BW2952) protein is p-hydroxybenzoic acid efflux pump subunit AaeB.